Here is a 574-residue protein sequence, read N- to C-terminus: Phosphatidylinositol 4-kinase gamma 3 (574 aa).

2 Ubiquitin-like domains span residues 32-109 (PILV…SDLQ) and 110-188 (AISV…AKVR). The 299-residue stretch at 257–555 (GNGPIRSSDG…IVPTETTEDE (299 aa)) folds into the PI3K/PI4K catalytic domain. Residues 263–269 (SSDGSGG) are G-loop. ATP is bound by residues 264 to 270 (SDGSGGA), Lys286, and 381 to 384 (QMFV). Positions 414-422 (ANADRHAGN) are catalytic loop. The tract at residues 438 to 464 (PIDHGYCFPNKFEDCTFEWLYWPQAKE) is activation loop. Asp440 is an ATP binding site.

The protein belongs to the PI3/PI4-kinase family. Type II PI4K subfamily.

It catalyses the reaction a 1,2-diacyl-sn-glycero-3-phospho-(1D-myo-inositol) + ATP = a 1,2-diacyl-sn-glycero-3-phospho-(1D-myo-inositol 4-phosphate) + ADP + H(+). In terms of biological role, the phosphorylation of phosphatidylinositol (PI) to PI4P is the first committed step in the generation of phosphatidylinositol 4,5-bisphosphate (PIP2), a precursor of the second messenger inositol 1,4,5-trisphosphate (InsP3). The polypeptide is Phosphatidylinositol 4-kinase gamma 3 (PI4KG3) (Arabidopsis thaliana (Mouse-ear cress)).